Consider the following 560-residue polypeptide: MKVWMAILISILCWQSSAWAVCPAWSPARAQEEISRLQQQIKQWDDDYWKEGKSEVEDGVYDQLSARLTQWQRCFGNETRDAMMPPLNGAVMHPVAHTGVRKMADKNALSLWMRERSDLWVQPKVDGVAVTLVYRDGKLNKAISRGNGLKGEDWTQKVRLISAVPQTVSGPLANSTLQGEIFLKRKGHIQQQMGGINARAKVAGLMMRQGNSDTLNSLAVFVWAWPDGPQLMTDRLKELATAGFTLTQTYTRAVKNADEVAHVRNEWWKAKLPFVTDGVVVRAAKEPESRHWLPGQAEWLVAWKYQPVAQVAEVKAIQFAVGKSGKISVVASLVPVMLDDKKVQRVNIGSVRHWQEWDIAPGDQILVSLAGQGIPRIDDVVWRGAERTKPTPPENRFNSLTCYFASDVCQEQFISRLVWLGSKQVLGLDGIGEAGWRALHQTHRFEHIFSWLLLTPEQLQNTPGIAKSKSAQLWHQFNLARQQPFTRWVMAMGIPLTRAALNASDERSWSQLLFSTEQFWQQLPGTGSGRARQVIEWKENAQIKKLGSWLAAQQITGFEP.

Lys-124 acts as the N6-AMP-lysine intermediate in catalysis.

This sequence belongs to the NAD-dependent DNA ligase family. LigB subfamily.

It catalyses the reaction NAD(+) + (deoxyribonucleotide)n-3'-hydroxyl + 5'-phospho-(deoxyribonucleotide)m = (deoxyribonucleotide)n+m + AMP + beta-nicotinamide D-nucleotide.. Catalyzes the formation of phosphodiester linkages between 5'-phosphoryl and 3'-hydroxyl groups in double-stranded DNA using NAD as a coenzyme and as the energy source for the reaction. In Escherichia coli O7:K1 (strain IAI39 / ExPEC), this protein is DNA ligase B.